A 284-amino-acid polypeptide reads, in one-letter code: Pantothenate synthetase (284 aa).

30–37 (MGALHDGH) lines the ATP pocket. The active-site Proton donor is the H37. Q61 contacts (R)-pantoate. Q61 contacts beta-alanine. ATP is bound at residue 147 to 150 (GEKD). Q153 provides a ligand contact to (R)-pantoate. Residues V176 and 184 to 187 (KSSR) each bind ATP.

It belongs to the pantothenate synthetase family. As to quaternary structure, homodimer.

It localises to the cytoplasm. It carries out the reaction (R)-pantoate + beta-alanine + ATP = (R)-pantothenate + AMP + diphosphate + H(+). It functions in the pathway cofactor biosynthesis; (R)-pantothenate biosynthesis; (R)-pantothenate from (R)-pantoate and beta-alanine: step 1/1. Catalyzes the condensation of pantoate with beta-alanine in an ATP-dependent reaction via a pantoyl-adenylate intermediate. The polypeptide is Pantothenate synthetase (Chloroherpeton thalassium (strain ATCC 35110 / GB-78)).